The chain runs to 120 residues: Ribonuclease P protein component 4 (120 aa).

Positions 68, 71, 97, and 100 each coordinate Zn(2+).

It belongs to the eukaryotic/archaeal RNase P protein component 4 family. As to quaternary structure, consists of a catalytic RNA component and at least 5 protein subunits. Forms a heterodimeric subcomplex with Rnp1. Reconstituted enzyme missing individual protein subunits is suboptimally active, showing each subunit contributes to optimization of activity. Zn(2+) is required as a cofactor.

It localises to the cytoplasm. It carries out the reaction Endonucleolytic cleavage of RNA, removing 5'-extranucleotides from tRNA precursor.. Part of ribonuclease P, a protein complex that generates mature tRNA molecules by cleaving their 5'-ends. Binds RNase P RNA. This is Ribonuclease P protein component 4 from Pyrococcus horikoshii (strain ATCC 700860 / DSM 12428 / JCM 9974 / NBRC 100139 / OT-3).